Consider the following 547-residue polypeptide: Glucose-6-phosphate isomerase (547 aa).

The active-site Proton donor is the Glu350. Residues His381 and Lys510 contribute to the active site.

This sequence belongs to the GPI family.

The protein resides in the cytoplasm. It catalyses the reaction alpha-D-glucose 6-phosphate = beta-D-fructose 6-phosphate. It functions in the pathway carbohydrate biosynthesis; gluconeogenesis. The protein operates within carbohydrate degradation; glycolysis; D-glyceraldehyde 3-phosphate and glycerone phosphate from D-glucose: step 2/4. In terms of biological role, catalyzes the reversible isomerization of glucose-6-phosphate to fructose-6-phosphate. The sequence is that of Glucose-6-phosphate isomerase from Mesorhizobium japonicum (strain LMG 29417 / CECT 9101 / MAFF 303099) (Mesorhizobium loti (strain MAFF 303099)).